We begin with the raw amino-acid sequence, 617 residues long: Procollagen galactosyltransferase 1 (617 aa).

Positions 1–31 are cleaved as a signal peptide; that stretch reads MAALPRGSRGLPLLPLLLLLPPLGGPRGADG. N-linked (GlcNAc...) asparagine glycans are attached at residues N91, N179, and N376. The segment covering 582 to 601 has biased composition (basic and acidic residues); it reads DRAKSQKMREQQALSREAKN. The interval 582 to 617 is disordered; sequence DRAKSQKMREQQALSREAKNSDVLQSPLDSTARDEL. The Prevents secretion from ER signature appears at 614-617; that stretch reads RDEL.

This sequence belongs to the glycosyltransferase 25 family. In terms of processing, N-glycosylated.

The protein localises to the endoplasmic reticulum lumen. It carries out the reaction (5R)-5-hydroxy-L-lysyl-[collagen] + UDP-alpha-D-galactose = (5R)-5-O-(beta-D-galactosyl)-5-hydroxy-L-lysyl-[collagen] + UDP + H(+). Its function is as follows. Beta-galactosyltransferase that transfers beta-galactose to hydroxylysine residues of type I collagen. By acting on collagen glycosylation, facilitates the formation of collagen triple helix. Also involved in the biosynthesis of collagen type IV. This Mus musculus (Mouse) protein is Procollagen galactosyltransferase 1 (Colgalt1).